A 450-amino-acid chain; its full sequence is 23S rRNA (uracil(1939)-C(5))-methyltransferase RlmD (450 aa).

One can recognise a TRAM domain in the interval Met1 to Asp62. [4Fe-4S] cluster is bound by residues Cys75, Cys81, Cys84, and Cys163. Positions 271, 300, 305, 321, 349, and 370 each coordinate S-adenosyl-L-methionine. Cys406 acts as the Nucleophile in catalysis.

It belongs to the class I-like SAM-binding methyltransferase superfamily. RNA M5U methyltransferase family. RlmD subfamily.

The enzyme catalyses uridine(1939) in 23S rRNA + S-adenosyl-L-methionine = 5-methyluridine(1939) in 23S rRNA + S-adenosyl-L-homocysteine + H(+). In terms of biological role, catalyzes the formation of 5-methyl-uridine at position 1939 (m5U1939) in 23S rRNA. In Ralstonia nicotianae (strain ATCC BAA-1114 / GMI1000) (Ralstonia solanacearum), this protein is 23S rRNA (uracil(1939)-C(5))-methyltransferase RlmD.